The following is a 347-amino-acid chain: MDKKKALDAALSQIERSFGKGSIMRLGQKEGVVEIETISTGSLSLDIALGVGGLPKGRIIEIYGPESSGKTTLALHAIAEAQKNGGVCAFVDAEHALDPIYARKLGVDLENLFVSQPDTGEQALEITETLVRSGAVDVLVVDSVAALTPRAEIDGEMSDSLPGLQARLMSKALRKLTASIFRSNCMVIFINQIRMKIGVMFGSPETTTGGNALKFYASVRLDIRRIGSIKDKELVVGNQTRVKVVKNKLAPPFKQVEFDIIYGEGISKLGELIDLGVKVGIVEKSGAWFSYNSQRLGQGRENAKQFLREHAEIAAEIETALRQNAGLLAIELLENVGADNIENDEEI.

Position 64 to 71 (64 to 71 (GPESSGKT)) interacts with ATP.

It belongs to the RecA family.

The protein localises to the cytoplasm. Its function is as follows. Can catalyze the hydrolysis of ATP in the presence of single-stranded DNA, the ATP-dependent uptake of single-stranded DNA by duplex DNA, and the ATP-dependent hybridization of homologous single-stranded DNAs. It interacts with LexA causing its activation and leading to its autocatalytic cleavage. The protein is Protein RecA of Bartonella bacilliformis (strain ATCC 35685 / KC583 / Herrer 020/F12,63).